The primary structure comprises 583 residues: PTS system lactose-specific EIICB component (583 aa).

The 402-residue stretch at 8-409 folds into the PTS EIIC type-3 domain; it reads IEKGKPFFEK…VVDVMIYYPF (402 aa). Helical transmembrane passes span 30-50, 64-84, 103-123, 137-157, 176-196, 222-242, 283-303, 339-359, and 381-401; these read GFIA…ITYV, GILM…VAGT, INFI…AADP, KGLL…NFFI, VFKD…LDLL, GWIG…VGIH, FVAT…FMWL, VFFI…KFFV, and IVMG…LIVV. Positions 453 to 462 are enriched in low complexity; the sequence is ANETTTTESA. Positions 453 to 475 are disordered; that stretch reads ANETTTTESAPSDEEVSAKNSSN. Positions 480-583 constitute a PTS EIIB type-3 domain; it reads QTNVLVLCAG…LDFVQQQFEK (104 aa). Catalysis depends on Cys487, which acts as the Phosphocysteine intermediate; for EIIB activity. A Phosphocysteine; by EIIA modification is found at Cys487.

Its subcellular location is the cell membrane. It carries out the reaction lactose(out) + N(pros)-phospho-L-histidyl-[protein] = lactose 6-phosphate(in) + L-histidyl-[protein]. Its function is as follows. The phosphoenolpyruvate-dependent sugar phosphotransferase system (sugar PTS), a major carbohydrate active transport system, catalyzes the phosphorylation of incoming sugar substrates concomitantly with their translocation across the cell membrane. The enzyme II LacEF PTS system is involved in lactose transport. This chain is PTS system lactose-specific EIICB component, found in Staphylococcus haemolyticus (strain JCSC1435).